Here is a 132-residue protein sequence, read N- to C-terminus: MAITKSKQQKTRKKVKRVVSDGIVHIHASFNNTIVTFTDRQGNALCWATSGGSGFRGSRKSTPYAAQVATERAAAVAKEYGMKSVAVFVHGPGPGRESTIRELITQDFKIVEITDVTGIPHNGCKPPIKRRV.

This sequence belongs to the universal ribosomal protein uS11 family. Part of the 30S ribosomal subunit. Interacts with proteins S7 and S18. Binds to IF-3.

In terms of biological role, located on the platform of the 30S subunit, it bridges several disparate RNA helices of the 16S rRNA. Forms part of the Shine-Dalgarno cleft in the 70S ribosome. The sequence is that of Small ribosomal subunit protein uS11 from Legionella pneumophila (strain Corby).